Here is a 474-residue protein sequence, read N- to C-terminus: 3-isopropylmalate dehydratase large subunit (474 aa).

[4Fe-4S] cluster contacts are provided by Cys-353, Cys-414, and Cys-417.

The protein belongs to the aconitase/IPM isomerase family. LeuC type 1 subfamily. As to quaternary structure, heterodimer of LeuC and LeuD. [4Fe-4S] cluster is required as a cofactor.

The enzyme catalyses (2R,3S)-3-isopropylmalate = (2S)-2-isopropylmalate. The protein operates within amino-acid biosynthesis; L-leucine biosynthesis; L-leucine from 3-methyl-2-oxobutanoate: step 2/4. In terms of biological role, catalyzes the isomerization between 2-isopropylmalate and 3-isopropylmalate, via the formation of 2-isopropylmaleate. In Xylella fastidiosa (strain M12), this protein is 3-isopropylmalate dehydratase large subunit.